A 180-amino-acid chain; its full sequence is Large ribosomal subunit protein uL18m (180 aa).

It belongs to the universal ribosomal protein uL18 family. Component of the mitochondrial ribosome large subunit (39S) which comprises a 16S rRNA and about 50 distinct proteins.

It localises to the mitochondrion. In terms of biological role, together with thiosulfate sulfurtransferase (TST), acts as a mitochondrial import factor for the cytosolic 5S rRNA. The precursor form shows RNA chaperone activity; is able to fold the 5S rRNA into an import-competent conformation that is recognized by rhodanese (TST). Both the cytoplasmic and mitochondrial forms are able to bind to the helix IV-loop D in the gamma domain of the 5S rRNA. This Bos taurus (Bovine) protein is Large ribosomal subunit protein uL18m (MRPL18).